The primary structure comprises 287 residues: 4-diphosphocytidyl-2-C-methyl-D-erythritol kinase (287 aa).

Lys-12 is an active-site residue. 95–105 (PAQAGMGGGSS) contacts ATP. Asp-137 is a catalytic residue.

The protein belongs to the GHMP kinase family. IspE subfamily.

It catalyses the reaction 4-CDP-2-C-methyl-D-erythritol + ATP = 4-CDP-2-C-methyl-D-erythritol 2-phosphate + ADP + H(+). It participates in isoprenoid biosynthesis; isopentenyl diphosphate biosynthesis via DXP pathway; isopentenyl diphosphate from 1-deoxy-D-xylulose 5-phosphate: step 3/6. In terms of biological role, catalyzes the phosphorylation of the position 2 hydroxy group of 4-diphosphocytidyl-2C-methyl-D-erythritol. The chain is 4-diphosphocytidyl-2-C-methyl-D-erythritol kinase from Delftia acidovorans (strain DSM 14801 / SPH-1).